Here is a 363-residue protein sequence, read N- to C-terminus: 3-isopropylmalate dehydrogenase (363 aa).

78 to 91 (GPKWEHLPPDQQPE) lines the NAD(+) pocket. Positions 99, 109, 138, and 227 each coordinate substrate. Asp-227, Asp-251, and Asp-255 together coordinate Mg(2+). 285–297 (GSAPDITGKNIAN) contributes to the NAD(+) binding site.

It belongs to the isocitrate and isopropylmalate dehydrogenases family. LeuB type 1 subfamily. As to quaternary structure, homodimer. Mg(2+) is required as a cofactor. Mn(2+) serves as cofactor.

Its subcellular location is the cytoplasm. It carries out the reaction (2R,3S)-3-isopropylmalate + NAD(+) = 4-methyl-2-oxopentanoate + CO2 + NADH. It participates in amino-acid biosynthesis; L-leucine biosynthesis; L-leucine from 3-methyl-2-oxobutanoate: step 3/4. Catalyzes the oxidation of 3-carboxy-2-hydroxy-4-methylpentanoate (3-isopropylmalate) to 3-carboxy-4-methyl-2-oxopentanoate. The product decarboxylates to 4-methyl-2 oxopentanoate. In Shigella boydii serotype 4 (strain Sb227), this protein is 3-isopropylmalate dehydrogenase.